The primary structure comprises 419 residues: Zinc finger protein Pegasus (419 aa).

C2H2-type zinc fingers lie at residues 79–101 (LKCR…IRIH), 107–129 (HRCH…MRSH), and 135–158 (YKCE…RRRH). Disordered regions lie at residues 203-255 (LQKP…DQDM) and 310-360 (SVNT…TPVQ). The segment covering 208–228 (SEQHHLGDFTHDLPPHAHLHQ) has biased composition (basic and acidic residues). Polar residues-rich tracts occupy residues 310–320 (SVNTAQASSPI) and 341–360 (ERTS…TPVQ). 2 C2H2-type zinc fingers span residues 366–388 (HHCP…MGCH) and 394–418 (FQCN…RGQH).

The protein belongs to the Ikaros C2H2-type zinc-finger protein family. Probably self-associates.

It is found in the nucleus. Functionally, transcriptional repressor that binds the core 5'GNNTGTNG-3' DNA consensus sequence. This Danio rerio (Zebrafish) protein is Zinc finger protein Pegasus (ikzf5).